Here is a 366-residue protein sequence, read N- to C-terminus: ATP-dependent 6-phosphofructokinase (366 aa).

ATP contacts are provided by residues glycine 16, 78–79 (RE), and 118–121 (GNGT). A disordered region spans residues 74–94 (LGTSREKPFKPDPGEKDSEAG). Basic and acidic residues predominate over residues 77 to 94 (SREKPFKPDPGEKDSEAG). A Mg(2+)-binding site is contributed by asparagine 119. Substrate is bound by residues 141–143 (TID), arginine 178, 185–187 (MGH), glutamate 238, arginine 282, and 288–291 (YLQR). Residue aspartate 143 is the Proton acceptor of the active site.

The protein belongs to the phosphofructokinase type A (PFKA) family. Mixed-substrate PFK group III subfamily. As to quaternary structure, homodimer or homotetramer. The cofactor is Mg(2+).

It localises to the cytoplasm. The enzyme catalyses beta-D-fructose 6-phosphate + ATP = beta-D-fructose 1,6-bisphosphate + ADP + H(+). It functions in the pathway carbohydrate degradation; glycolysis; D-glyceraldehyde 3-phosphate and glycerone phosphate from D-glucose: step 3/4. Functionally, catalyzes the phosphorylation of D-fructose 6-phosphate to fructose 1,6-bisphosphate by ATP, the first committing step of glycolysis. This is ATP-dependent 6-phosphofructokinase from Spirochaeta thermophila (strain ATCC 49972 / DSM 6192 / RI 19.B1).